A 281-amino-acid chain; its full sequence is MGRENILKYQLEHDHESDLVTEKDQSLLLDNNNNLNGMNNTIKTHPVRVSSGNHNNFPFTLSSESTLQDFLNNNKFFVDSIKHNHGNQIFDLNGQGQSPHTLWIGCSDSRAGDQCLATLPGEIFVHRNIANIVNANDISSQGVIQFAIDVLKVKKIIVCGHTDCGGIWASLSKKKIGGVLDLWLNPVRHIRAANLKLLEEYNQDPKLKAKKLAELNVISSVTALKRHPSASVALKKNEIEVWGMLYDVATGYLSQVEIPQDEFEDLFHVHDEHDEEEYNPH.

Residues Cys-106, His-161, and Cys-164 each contribute to the Zn(2+) site.

Belongs to the beta-class carbonic anhydrase family. The cofactor is Zn(2+).

It is found in the cytoplasm. The protein localises to the nucleus. It localises to the mitochondrion intermembrane space. It carries out the reaction hydrogencarbonate + H(+) = CO2 + H2O. Amines and amino acids act as activators of catalytic activity, whereas natural product-based phenols, dithiocarbamates, aliphatic and aromatic carboxylates, boronic acids, and sulfonamides act as inhibitors of enzymatic activity. Also inhibited by anions such as cyanide and carbonate, and to a lesser extent by sulfate, phenylboronic, and phenyl arsonic acid. In terms of biological role, catalyzes the reversible hydration of CO(2) to H(2)CO(3). The main role may be to provide inorganic carbon for the bicarbonate-dependent carboxylation reactions catalyzed by pyruvate carboxylase, acetyl-CoA carboxylase and carbamoyl-phosphate synthetase. Involved in protection against oxidative damage. Acts as a CO(2) chemosensor and induces CO(2)-mediated filamentation. Essential for pathological growth in niches where sufficient CO(2) is not supplied by the host. Necessary for white-to-opaque switching at low CO(2) concentrations. This Candida albicans (strain SC5314 / ATCC MYA-2876) (Yeast) protein is Carbonic anhydrase (NCE103).